Consider the following 343-residue polypeptide: MLTNRQLQILQVIIDDFILSAQPVGSRQISKKQGITFSPATIRNEMADLEELGYLEKTHTSSGRVPSEKGYRFYVDHLLSPQGINSRDIQQIQSIFNDRLVEVEHIIRKSANILSELTSYTSILLGPDVQRHRVKRFSIVPLSSDTAVAIIVTNNGHVENRLFNLPPDFTASDLEKMVNILNDRLIGVSLEELHKSLEAEVLAVLQQHVQSADDFYPRTRNSDNAIIQKAKIFYGGKTNMFNQPEFHDLNKVRMILDLMETTSQVQSLFHPNESGIHIRIGSENKQLEMENCSVITTTYSIGDDQQGAIAIIGPTRMDYKRVVALLDVIRLDLTQAFTKNRSE.

This sequence belongs to the HrcA family.

Functionally, negative regulator of class I heat shock genes (grpE-dnaK-dnaJ and groELS operons). Prevents heat-shock induction of these operons. This is Heat-inducible transcription repressor HrcA from Lysinibacillus sphaericus (Bacillus sphaericus).